Consider the following 274-residue polypeptide: 3-methyl-2-oxobutanoate hydroxymethyltransferase (274 aa).

Mg(2+)-binding residues include Asp-44 and Asp-83. Residues 44–45 (DS), Asp-83, and Lys-113 contribute to the 3-methyl-2-oxobutanoate site. Position 115 (Glu-115) interacts with Mg(2+). Catalysis depends on Glu-182, which acts as the Proton acceptor.

Belongs to the PanB family. As to quaternary structure, homodecamer; pentamer of dimers. It depends on Mg(2+) as a cofactor.

The protein localises to the cytoplasm. It carries out the reaction 3-methyl-2-oxobutanoate + (6R)-5,10-methylene-5,6,7,8-tetrahydrofolate + H2O = 2-dehydropantoate + (6S)-5,6,7,8-tetrahydrofolate. Its pathway is cofactor biosynthesis; (R)-pantothenate biosynthesis; (R)-pantoate from 3-methyl-2-oxobutanoate: step 1/2. In terms of biological role, catalyzes the reversible reaction in which hydroxymethyl group from 5,10-methylenetetrahydrofolate is transferred onto alpha-ketoisovalerate to form ketopantoate. The protein is 3-methyl-2-oxobutanoate hydroxymethyltransferase of Campylobacter jejuni subsp. jejuni serotype O:6 (strain 81116 / NCTC 11828).